We begin with the raw amino-acid sequence, 298 residues long: GTPase Era (298 aa).

Residues 4–171 (RAGFVALIGR…KEKIVSFLPE (168 aa)) enclose the Era-type G domain. Residues 12 to 19 (GRTNVGKS) are G1. A GTP-binding site is contributed by 12-19 (GRTNVGKS). Residues 38-42 (QTTRN) form a G2 region. Residues 59 to 62 (DTPG) are G3. GTP-binding positions include 59 to 63 (DTPGI) and 121 to 124 (NKID). Residues 121–124 (NKID) form a G4 region. Residues 150–152 (ISA) form a G5 region. One can recognise a KH type-2 domain in the interval 202-280 (LEEEVPHGVY…FLQLWVKVRK (79 aa)).

This sequence belongs to the TRAFAC class TrmE-Era-EngA-EngB-Septin-like GTPase superfamily. Era GTPase family. In terms of assembly, monomer.

The protein resides in the cytoplasm. It is found in the cell membrane. An essential GTPase that binds both GDP and GTP, with rapid nucleotide exchange. Plays a role in 16S rRNA processing and 30S ribosomal subunit biogenesis and possibly also in cell cycle regulation and energy metabolism. This chain is GTPase Era, found in Caldanaerobacter subterraneus subsp. tengcongensis (strain DSM 15242 / JCM 11007 / NBRC 100824 / MB4) (Thermoanaerobacter tengcongensis).